Consider the following 283-residue polypeptide: Protein-L-isoaspartate O-methyltransferase (283 aa).

Residue Ser122 is part of the active site.

Belongs to the methyltransferase superfamily. L-isoaspartyl/D-aspartyl protein methyltransferase family.

The protein resides in the cytoplasm. The catalysed reaction is [protein]-L-isoaspartate + S-adenosyl-L-methionine = [protein]-L-isoaspartate alpha-methyl ester + S-adenosyl-L-homocysteine. Its function is as follows. Catalyzes the methyl esterification of L-isoaspartyl residues in peptides and proteins that result from spontaneous decomposition of normal L-aspartyl and L-asparaginyl residues. It plays a role in the repair and/or degradation of damaged proteins. This is Protein-L-isoaspartate O-methyltransferase from Leptothrix cholodnii (strain ATCC 51168 / LMG 8142 / SP-6) (Leptothrix discophora (strain SP-6)).